An 886-amino-acid polypeptide reads, in one-letter code: Vam6/Vps39-like protein (886 aa).

Residues 15–294 (PLQIDCLAAW…RFITSGGSNI (280 aa)) enclose the CNH domain. A CHCR repeat occupies 573–750 (FTEDLPEVES…LLRMYLSPPS (178 aa)).

Belongs to the VAM6/VPS39 family. Homooligomer. Interacts with TGFBR2 and, less efficiently, with TGFBR1; interaction with TGFBR2 is independent of the receptor kinase activity and of the presence of TGF-beta. Also interacts with ACVR2B, but not with BMPR2. Interacts with SMAD4, preferentially following TGF-beta treatment. Component of the putative homotypic fusion and vacuole protein sorting (HOPS) complex; the core of which composed of the class C Vps proteins VPS11, VPS16, VPS18 and VPS33A, is associated with VPS39 and VPS41. Interacts with PLEKHM2; involved in VPS39 recruitment to ARL8B-containing lysosomes. Associates with adapter protein complex 3 (AP-3) and clathrin:AP-3 complexes. Interacts with STX17; this interaction is increased in the absence of TMEM39A. Interacts with RAB7, RAB2A and RAB2B. Interacts with RAB2A (GTP-bound); the interaction contributes to obtaining a functional HOPS complex that promotes autophagosome-lysosome membrane fusion driven by STX17-SNAP29-VAMP8. Interacts with RAB39A (GTP-bound) and RAB39B (GTP-bound); interaction with RAB39A contributes to obtaining a functional HOPS complex.

It localises to the cytoplasm. Its subcellular location is the lysosome membrane. The protein resides in the late endosome membrane. Functionally, regulator of TGF-beta/activin signaling, inhibiting SMAD3- and activating SMAD2-dependent transcription. Acts by interfering with SMAD3/SMAD4 complex formation, this would lead to inhibition of SMAD3-dependent transcription and relieve SMAD3 inhibition of SMAD2-dependent promoters, thus increasing SMAD2-dependent transcription. In terms of biological role, plays a role in vesicle-mediated protein trafficking to lysosomal compartments including the endocytic membrane transport and autophagic pathways. Acts as a component of the HOPS endosomal tethering complex which is proposed to be involved in the Rab5-to-Rab7 endosome conversion probably implicating MON1A/B, and via binding SNAREs and SNARE complexes to mediate tethering and docking events during SNARE-mediated membrane fusion. The HOPS complex is proposed to be recruited to Rab7 on the late endosomal membrane and to regulate late endocytic, phagocytic and autophagic traffic towards lysosomes. Involved in homotypic vesicle fusions between late endosomes and in heterotypic fusions between late endosomes and lysosomes. Required for fusion of endosomes and autophagosomes with lysosomes. This chain is Vam6/Vps39-like protein, found in Mus musculus (Mouse).